The chain runs to 136 residues: Transcription antitermination protein NusB (136 aa).

It belongs to the NusB family.

Involved in transcription antitermination. Required for transcription of ribosomal RNA (rRNA) genes. Binds specifically to the boxA antiterminator sequence of the ribosomal RNA (rrn) operons. This chain is Transcription antitermination protein NusB, found in Pseudarthrobacter chlorophenolicus (strain ATCC 700700 / DSM 12829 / CIP 107037 / JCM 12360 / KCTC 9906 / NCIMB 13794 / A6) (Arthrobacter chlorophenolicus).